Reading from the N-terminus, the 512-residue chain is Neuronal acetylcholine receptor subunit alpha-3 (512 aa).

Residues 1-23 form the signal peptide; it reads MNSASRITLFFLLTVLITQECLS. At 24-242 the chain is on the extracellular side; the sequence is SKGEDRLFRR…PLFYTINLII (219 aa). N-linked (GlcNAc...) asparagine glycans are attached at residues N47 and N164. Disulfide bonds link C151–C165 and C215–C216. The chain crosses the membrane as a helical span at residues 243–258; sequence PCLLISFLTILVFYLP. Topologically, residues 259–260 are cytoplasmic; the sequence is SD. Residues 261 to 277 traverse the membrane as a helical segment; that stretch reads CGEKVTLCISVLLSLTV. E263 is a Na(+) binding site. Residues 278 to 299 lie on the Extracellular side of the membrane; that stretch reads FLLVITETIPSTSLVIPLIGEY. Residues 300–318 form a helical membrane-spanning segment; sequence LLFTMIFVTLSIVITVFVL. Residues 319-482 lie on the Cytoplasmic side of the membrane; that stretch reads NVHYRTPMTH…EDDWKYVAMV (164 aa). Residues 356–389 are disordered; sequence ESSGKGGGEIAGSSGTGGGRGAEGKKMKSSASQQ. Over residues 359–376 the composition is skewed to gly residues; the sequence is GKGGGEIAGSSGTGGGRG. A helical membrane pass occupies residues 483-501; it reads IDRIFLWVFVLVCVLGTLG. Topologically, residues 502–512 are extracellular; that stretch reads LFLQPLIGFFS.

It belongs to the ligand-gated ion channel (TC 1.A.9) family. Acetylcholine receptor (TC 1.A.9.1) subfamily. Alpha-3/CHRNA3 sub-subfamily. As to quaternary structure, neuronal AChR is composed of two different types of subunits: alpha and beta. CHRNA3/Alpha-3 subunit can be combined to CHRNB2/beta-2 or CHRNB4/beta-4 to give rise to functional receptors. In terms of tissue distribution, expressed in retina and brain.

The protein localises to the synaptic cell membrane. It localises to the cell membrane. The protein resides in the endoplasmic reticulum. It is found in the golgi apparatus. It catalyses the reaction K(+)(in) = K(+)(out). The catalysed reaction is Na(+)(in) = Na(+)(out). The enzyme catalyses Ca(2+)(in) = Ca(2+)(out). With respect to regulation, activated by a myriad of ligands such as acetylcholine, cytisine, nicotine, choline and epibatidine. The heteropentamer CHRNA3:CHRNB2 activity is blocked by alpha-conotoxins ImI, ImII, PnIA, GID and MII. The heteropentamer CHRNA3:CHRNB4 activity is blocked by the alpha-conotoxin ImI and AuIB. Component of neuronal acetylcholine receptors (nAChRs) that function as pentameric, ligand-gated cation channels with high calcium permeability among other activities. nAChRs are excitatory neurotrasnmitter receptors formed by a collection of nAChR subunits known to mediate synaptic transmission in the nervous system and the neuromuscular junction. Each nAchR subunit confers differential attributes to channel properties, including activation, deactivation and desensitization kinetics, pH sensitivity, cation permeability, and binding to allosteric modulators. CHRNA3 forms heteropentameric neuronal acetylcholine receptors with CHRNB2 and CHRNB4. CHRNA3:CHRNB4 being predominant in neurons of the autonomic ganglia, it is known as ganglionic nicotinic receptor. CHRNA3:CHRNB4 also plays an important role in the habenulo-interpeduncular tract, modulating the mesolimbic dopamine system and affecting reward circuits and addiction. Hypothalamic CHRNA3:CHRNB4 nAChR activation by nicotine leads to activation of POMC neurons and a decrease in food intake. Also expressed in the urothelium where it modulates reflex bladder activity by increasing intracellular calcium through extracellular influx and basal ATP release. The sequence is that of Neuronal acetylcholine receptor subunit alpha-3 (chrna3) from Carassius auratus (Goldfish).